The following is a 254-amino-acid chain: Probable protein S-acyltransferase 15 (254 aa).

The next 2 membrane-spanning stretches (helical) occupy residues 1–21 (MGFVYYVTLFVFIDDWVGLQS) and 28–48 (ALLFSLLASLCLFSLSICVLV). The DHHC domain maps to 75 to 125 (RKCDKCFAYKPLRTHHCRVCRRCVLKMDHHCLWINNCVGYANYKAFFILVF). The S-palmitoyl cysteine intermediate role is filled by cysteine 105. 2 helical membrane-spanning segments follow: residues 119–139 (AFFILVFYATVASIYSTVLLV) and 164–184 (IFMIGLSITLGTLLCWHIYLI).

It belongs to the DHHC palmitoyltransferase family.

The protein localises to the endoplasmic reticulum membrane. It is found in the cytoplasmic vesicle membrane. The enzyme catalyses L-cysteinyl-[protein] + hexadecanoyl-CoA = S-hexadecanoyl-L-cysteinyl-[protein] + CoA. Functionally, palmitoyl acyltransferase. The protein is Probable protein S-acyltransferase 15 (PAT15) of Arabidopsis thaliana (Mouse-ear cress).